A 645-amino-acid polypeptide reads, in one-letter code: E3 ubiquitin-protein ligase ORTHRUS 2 (645 aa).

The PHD-type zinc finger occupies Asp-12 to Glu-63. Residues Leu-96–Asn-133 are disordered. Residues Cys-146 to Arg-185 form an RING-type 1 zinc finger. The YDG domain occupies Val-273–Arg-422. The RING-type 2 zinc-finger motif lies at Cys-518–Pro-575. A coiled-coil region spans residues Gln-583–Glu-613. The segment at Lys-599 to Arg-645 is disordered. Acidic residues predominate over residues Glu-603–Ser-625. The segment covering Glu-626–Thr-636 has biased composition (basic and acidic residues).

In terms of assembly, interacts with histones CENH3, HTB2, HTR3 and H4. In terms of tissue distribution, mostly expressed in inflorescence and, to a lower extent, in leaves.

The protein localises to the nucleus. It catalyses the reaction S-ubiquitinyl-[E2 ubiquitin-conjugating enzyme]-L-cysteine + [acceptor protein]-L-lysine = [E2 ubiquitin-conjugating enzyme]-L-cysteine + N(6)-ubiquitinyl-[acceptor protein]-L-lysine.. It participates in protein modification; protein ubiquitination. In terms of biological role, E3 ubiquitin-protein ligase. Participates in CpG methylation-dependent transcriptional regulation and epigenetic transcriptional silencing. Mediates ubiquitination with the E2 ubiquitin-conjugating enzyme UBC11. Promotes methylation-mediated gene silencing leading, for example, to early flowering. Associates with methylated DNA, and can bind to CpG, CpNpG, and CpNpN DNA motifs, with a strong preference for methylated forms, and with highest affinity for CpG substrate. Probably acts at the DNA methylation?histone interface to maintain centromeric heterochromatin. This Arabidopsis thaliana (Mouse-ear cress) protein is E3 ubiquitin-protein ligase ORTHRUS 2 (ORTH2).